We begin with the raw amino-acid sequence, 760 residues long: Xaa-Pro dipeptidyl-peptidase (760 aa).

Residues S349, D469, and H499 each act as charge relay system in the active site.

It belongs to the peptidase S15 family. As to quaternary structure, homodimer.

The protein resides in the cytoplasm. The enzyme catalyses Hydrolyzes Xaa-Pro-|- bonds to release unblocked, N-terminal dipeptides from substrates including Ala-Pro-|-p-nitroanilide and (sequentially) Tyr-Pro-|-Phe-Pro-|-Gly-Pro-|-Ile.. Functionally, removes N-terminal dipeptides sequentially from polypeptides having unsubstituted N-termini provided that the penultimate residue is proline. The chain is Xaa-Pro dipeptidyl-peptidase from Streptococcus pyogenes serotype M12 (strain MGAS9429).